Reading from the N-terminus, the 166-residue chain is Nicotine metabolites export pump subunit NepB (166 aa).

4 consecutive transmembrane segments (helical) span residues 51–71, 77–97, 108–128, and 133–153; these read LHAW…TVIL, FQLP…FFLL, VAYA…GAII, and VTLG…ILNL.

Belongs to the drug/metabolite transporter (DMT) superfamily. Small multidrug resistance (SMR) (TC 2.A.7.1) family. NepA/NepB subfamily. In terms of assembly, the efflux pump is composed of NepA and NepB.

The protein resides in the cell membrane. Its function is as follows. Component of an efflux pump responsible for the transport of nicotine breakdown products, in particular methylamine, out of the cell. This pump apparently serves as a metabolic valve for nicotine catabolites and may protect the bacteria from the potentially toxic side effects of these compounds. The sequence is that of Nicotine metabolites export pump subunit NepB (nepB) from Paenarthrobacter nicotinovorans (Arthrobacter nicotinovorans).